The chain runs to 252 residues: Type III pantothenate kinase (252 aa).

6-13 (DMGNTRLK) contributes to the ATP binding site. Substrate is bound by residues Y93 and 100–103 (GVDR). The active-site Proton acceptor is the D102. Residue T126 participates in ATP binding. T179 serves as a coordination point for substrate.

It belongs to the type III pantothenate kinase family. As to quaternary structure, homodimer. Requires NH4(+) as cofactor. K(+) serves as cofactor.

Its subcellular location is the cytoplasm. It catalyses the reaction (R)-pantothenate + ATP = (R)-4'-phosphopantothenate + ADP + H(+). The protein operates within cofactor biosynthesis; coenzyme A biosynthesis; CoA from (R)-pantothenate: step 1/5. Functionally, catalyzes the phosphorylation of pantothenate (Pan), the first step in CoA biosynthesis. This Cellvibrio japonicus (strain Ueda107) (Pseudomonas fluorescens subsp. cellulosa) protein is Type III pantothenate kinase.